Consider the following 86-residue polypeptide: Large ribosomal subunit protein bL31B (86 aa).

It belongs to the bacterial ribosomal protein bL31 family. Type B subfamily. As to quaternary structure, part of the 50S ribosomal subunit.

The chain is Large ribosomal subunit protein bL31B from Burkholderia cenocepacia (strain ATCC BAA-245 / DSM 16553 / LMG 16656 / NCTC 13227 / J2315 / CF5610) (Burkholderia cepacia (strain J2315)).